The primary structure comprises 330 residues: o-succinylbenzoate synthase (330 aa).

The active-site Proton donor is the Lys130. Positions 155, 184, and 206 each coordinate Mg(2+). Lys228 (proton acceptor) is an active-site residue.

It belongs to the mandelate racemase/muconate lactonizing enzyme family. MenC type 1 subfamily. As to quaternary structure, monomer. A divalent metal cation serves as cofactor.

The catalysed reaction is (1R,6R)-6-hydroxy-2-succinyl-cyclohexa-2,4-diene-1-carboxylate = 2-succinylbenzoate + H2O. Its pathway is quinol/quinone metabolism; 1,4-dihydroxy-2-naphthoate biosynthesis; 1,4-dihydroxy-2-naphthoate from chorismate: step 4/7. It functions in the pathway cofactor biosynthesis; phylloquinone biosynthesis. Functionally, converts 2-succinyl-6-hydroxy-2,4-cyclohexadiene-1-carboxylate (SHCHC) to 2-succinylbenzoate (OSB). Does not show N-succinylamino acid racemase (NSAR) activity with N-succinyl-L-phenylglycine as substrate. In Bdellovibrio bacteriovorus (strain ATCC 15356 / DSM 50701 / NCIMB 9529 / HD100), this protein is o-succinylbenzoate synthase.